The following is a 292-amino-acid chain: 2-(5''-triphosphoribosyl)-3'-dephosphocoenzyme-A synthase (292 aa).

This sequence belongs to the CitG/MdcB family.

The enzyme catalyses 3'-dephospho-CoA + ATP = 2'-(5''-triphospho-alpha-D-ribosyl)-3'-dephospho-CoA + adenine. In terms of biological role, catalyzes the formation of 2-(5''-triphosphoribosyl)-3'-dephosphocoenzyme-A, the precursor of the prosthetic group of the holo-acyl carrier protein (gamma chain) of citrate lyase, from ATP and dephospho-CoA. This Escherichia coli O6:K15:H31 (strain 536 / UPEC) protein is 2-(5''-triphosphoribosyl)-3'-dephosphocoenzyme-A synthase.